Reading from the N-terminus, the 149-residue chain is MGRICPVNSRARRLRARPGRPSGDSLPYHQLQGGAPRLWSPDPGRPAAYRRAHVCDVTAPRWGSTSRQGEGAVLQRMLRRRAPPSWSRDHAYSRRGWENVALFLNRKRKQEGTENTSICCRPESALACGGNLSPQFLKKVIQIQTQELW.

A disordered region spans residues M1–P41.

The sequence is that of Down syndrome critical region protein 9 (DSCR9) from Pan troglodytes (Chimpanzee).